The following is a 438-amino-acid chain: Serine/threonine-protein kinase VIK (438 aa).

The interval 1 to 31 (MSSDSPAAGDGGEQAAAGTSVPSPSYDKQKE) is disordered. ANK repeat units follow at residues 36–65 (SRTS…TLVH), 70–99 (DKRT…DVNA), and 103–133 (WKNT…SYGQ). The 266-residue stretch at 162–427 (FSNAAMIGKG…KRLEKIKETL (266 aa)) folds into the Protein kinase domain. ATP-binding positions include 168–176 (IGKGSFGEI) and lysine 189. Aspartate 285 (proton acceptor) is an active-site residue.

This sequence belongs to the protein kinase superfamily. Ser/Thr protein kinase family. In terms of assembly, interacts with BRL2. Binds to MSSP1/TMT1 at the tonoplast. Phosphorylated. In terms of tissue distribution, restricted to mature vascular cells. Mostly expressed in mature leaves and seeds, and, to a lower level, in seedlings, young leaves, flowers and siliques.

The protein resides in the vacuole. The catalysed reaction is L-seryl-[protein] + ATP = O-phospho-L-seryl-[protein] + ADP + H(+). It carries out the reaction L-threonyl-[protein] + ATP = O-phospho-L-threonyl-[protein] + ADP + H(+). Its function is as follows. Serine/threonine protein kinase which may function as an adapter protein for BRL2. Required during vascular development for the establishment of vein pattern in foliar organs. Mediates MSSP1/TMT1 phosphorylation and activation to enhance its carrier activity and consequently vacuolar sugar accumulation, particularly in response to cold. This chain is Serine/threonine-protein kinase VIK, found in Arabidopsis thaliana (Mouse-ear cress).